The chain runs to 300 residues: MWFNPRMSKNFRVVALIGKYQSPEVAEAVLRIAEFLRVRGLDVWIEQGTASSIGMAGQFAVASYEEIGAQADLAVVLGGDGTMLNTARRLSQHGVPLVGINQGRLGFLTDISRDEALPKLGEILEGRYTEESRAMLDAEVLRAGHRVFQTLALNDVVINKGDLGRMIEFDLSIDGEFVYTQRSDGMILATPTGSTAYALSANGPILHPNVGGIALVPLCPHALTARPVTLPDTSHIEIVLLPQHDARIHFDGQARFDARAGDRLRVTRSPDVVRLLHPQGYSYFAMLREKLHWSATPRRP.

Aspartate 80 functions as the Proton acceptor in the catalytic mechanism. Residues 80–81, 154–155, arginine 165, arginine 182, aspartate 184, 195–200, and glutamine 253 each bind NAD(+); these read DG, ND, and TAYALS.

The protein belongs to the NAD kinase family. A divalent metal cation serves as cofactor.

The protein localises to the cytoplasm. It carries out the reaction NAD(+) + ATP = ADP + NADP(+) + H(+). Involved in the regulation of the intracellular balance of NAD and NADP, and is a key enzyme in the biosynthesis of NADP. Catalyzes specifically the phosphorylation on 2'-hydroxyl of the adenosine moiety of NAD to yield NADP. This is NAD kinase from Aromatoleum aromaticum (strain DSM 19018 / LMG 30748 / EbN1) (Azoarcus sp. (strain EbN1)).